Consider the following 188-residue polypeptide: GPI-anchored hemophore ARB_01017 (188 aa).

The N-terminal stretch at Met1–Ala17 is a signal peptide. Residues Gln18–Thr107 form the CFEM domain. 4 disulfide bridges follow: Cys26-Cys64, Cys30-Cys59, Cys39-Cys45, and Cys47-Cys80. Residue Asp42 coordinates heme. The segment at Thr95–Thr163 is disordered. A lipid anchor (GPI-anchor amidated asparagine) is attached at Asn165. The propeptide at Ala166–Ala188 is removed in mature form.

It belongs to the RBT5 family. Post-translationally, the GPI-anchor is attached to the protein in the endoplasmic reticulum and serves to target the protein to the cell surface. There, the glucosamine-inositol phospholipid moiety is cleaved off and the GPI-modified mannoprotein is covalently attached via its lipidless GPI glycan remnant to the 1,6-beta-glucan of the outer cell wall layer.

It is found in the secreted. Its subcellular location is the cell wall. The protein localises to the cell membrane. GPI-anchored cell wall protein involved in stabilizing the cell wall. This is GPI-anchored hemophore ARB_01017 from Arthroderma benhamiae (strain ATCC MYA-4681 / CBS 112371) (Trichophyton mentagrophytes).